A 151-amino-acid polypeptide reads, in one-letter code: Transcriptional regulator MraZ (151 aa).

SpoVT-AbrB domains are found at residues A5–N52 and A81–E124.

Belongs to the MraZ family. In terms of assembly, forms oligomers.

The protein localises to the cytoplasm. It is found in the nucleoid. This chain is Transcriptional regulator MraZ, found in Haemophilus influenzae (strain PittGG).